A 477-amino-acid chain; its full sequence is UDP-N-acetylmuramate--L-alanine ligase (477 aa).

115–121 (GTHGKTT) contacts ATP.

The protein belongs to the MurCDEF family.

The protein localises to the cytoplasm. It carries out the reaction UDP-N-acetyl-alpha-D-muramate + L-alanine + ATP = UDP-N-acetyl-alpha-D-muramoyl-L-alanine + ADP + phosphate + H(+). The protein operates within cell wall biogenesis; peptidoglycan biosynthesis. Functionally, cell wall formation. This Gluconobacter oxydans (strain 621H) (Gluconobacter suboxydans) protein is UDP-N-acetylmuramate--L-alanine ligase.